A 383-amino-acid chain; its full sequence is uncharacterized protein (383 aa).

The next 10 membrane-spanning stretches (helical) occupy residues 25–45, 53–73, 103–123, 139–159, 166–186, 200–220, 238–258, 272–292, 309–329, and 332–352; these read LWVALCIVIGIALGKLLPAVA, IYNVSIPIAICLFFMMYPIMV, FTMVIFAQFFLGYLFAPLLTA, IAGCILLGIAPCTAMVLMWGY, GLTLVMVAVNSLAMLFLYAPL, WQTIVLSVLIYVGLPLAAGIY, FLHYLSPIAIVALLLTLILLF, IFLIAVPLFIQTNFIFLITYV, LIGASNHFEVAIATAVMLFGL, and GAALATVVGVLIEVPVMLMLV.

This sequence belongs to the arsenical resistance-3 (ACR3) (TC 2.A.59) family.

The protein localises to the cell membrane. This is an uncharacterized protein from Synechocystis sp. (strain ATCC 27184 / PCC 6803 / Kazusa).